Reading from the N-terminus, the 389-residue chain is E3 ubiquitin-protein ligase E3D (389 aa).

A2 carries the N-acetylalanine modification. The BRAT1-like motif motif lies at 129-159 (PLPGDNWGALVDEWCCHPDPFANKPLHPREN). C144 contacts Zn(2+). Positions 235–257 (LPSERNFPIIPRSQFVQSVLAQC) are interaction with UBE2C. The interval 353–389 (LPSTTCLELLLILSKSNATLPPSLRCMNSFQVAFLKM) is HECT-like.

As to quaternary structure, interacts with UBE2C/UbcH10 (E2 ubiquitin-conjugating enzyme). In vitro, interacts with cyclin-B. In terms of processing, ubiquitinated by UBCH10 (E2 ubiquitin-conjugating enzyme).

It localises to the cytoplasm. It catalyses the reaction S-ubiquitinyl-[E2 ubiquitin-conjugating enzyme]-L-cysteine + [acceptor protein]-L-lysine = [E2 ubiquitin-conjugating enzyme]-L-cysteine + N(6)-ubiquitinyl-[acceptor protein]-L-lysine.. The protein operates within protein modification; protein ubiquitination. E3 ubiquitin-protein ligase which accepts ubiquitin from specific E2 ubiquitin-conjugating enzymes, and transfers it to substrates, generally promoting their degradation by the proteasome. Independently of its E3 ubiquitin-protein ligase activity, acts as an inhibitor of CPSF3 endonuclease activity by blocking CPSF3 active site. The polypeptide is E3 ubiquitin-protein ligase E3D (UBE3D) (Bos taurus (Bovine)).